We begin with the raw amino-acid sequence, 208 residues long: MGQKVHPTGFRLGILKSWDSRWFATKDYAKLVHEDRKIRDYIKARLYHAGIAKVEIERAANKVKIRIFTARPGIVIGKKGAEIETLRRDLERKFKREILIDIQEVRRPELDATLVGENISLQLVRRVAFRRAMKRAVSAALKFGAKGVRVASAGRLGGAEMARREWYREGRVPLHTLRADIDYGTAIARTTYGAIGVKVWIFKGEVLP.

The region spanning 38 to 106 (IRDYIKARLY…EILIDIQEVR (69 aa)) is the KH type-2 domain.

It belongs to the universal ribosomal protein uS3 family. As to quaternary structure, part of the 30S ribosomal subunit. Forms a tight complex with proteins S10 and S14.

In terms of biological role, binds the lower part of the 30S subunit head. Binds mRNA in the 70S ribosome, positioning it for translation. In Syntrophobacter fumaroxidans (strain DSM 10017 / MPOB), this protein is Small ribosomal subunit protein uS3.